The following is a 432-amino-acid chain: Cyclic 2,3-diphosphoglycerate synthetase (432 aa).

The protein belongs to the cyclic 2,3-diphosphoglycerate synthetase family.

It localises to the cytoplasm. The enzyme catalyses (2R)-2,3-bisphosphoglycerate + ATP + H(+) = cyclic (2R)-2,3-bisphosphoglycerate + ADP + phosphate. In terms of biological role, catalyzes the formation of cyclic 2,3-diphosphoglycerate (cDPG) by formation of an intramolecular phosphoanhydride bond at the expense of ATP. In Thermococcus kodakarensis (strain ATCC BAA-918 / JCM 12380 / KOD1) (Pyrococcus kodakaraensis (strain KOD1)), this protein is Cyclic 2,3-diphosphoglycerate synthetase.